Consider the following 466-residue polypeptide: Ribulose bisphosphate carboxylase large chain (466 aa).

At lysine 5 the chain carries N6,N6,N6-trimethyllysine. Residues asparagine 114 and threonine 164 each contribute to the substrate site. Catalysis depends on lysine 166, which acts as the Proton acceptor. Residue lysine 168 participates in substrate binding. Mg(2+) is bound by residues lysine 192, aspartate 194, and glutamate 195. Lysine 192 is subject to N6-carboxylysine. The active-site Proton acceptor is histidine 285. Substrate-binding residues include arginine 286, histidine 318, and serine 370.

This sequence belongs to the RuBisCO large chain family. Type I subfamily. As to quaternary structure, heterohexadecamer of 8 large chains and 8 small chains; disulfide-linked. The disulfide link is formed within the large subunit homodimers. The cofactor is Mg(2+). Post-translationally, the disulfide bond which can form in the large chain dimeric partners within the hexadecamer appears to be associated with oxidative stress and protein turnover.

Its subcellular location is the plastid. The protein localises to the chloroplast. It carries out the reaction 2 (2R)-3-phosphoglycerate + 2 H(+) = D-ribulose 1,5-bisphosphate + CO2 + H2O. It catalyses the reaction D-ribulose 1,5-bisphosphate + O2 = 2-phosphoglycolate + (2R)-3-phosphoglycerate + 2 H(+). Functionally, ruBisCO catalyzes two reactions: the carboxylation of D-ribulose 1,5-bisphosphate, the primary event in carbon dioxide fixation, as well as the oxidative fragmentation of the pentose substrate in the photorespiration process. Both reactions occur simultaneously and in competition at the same active site. The polypeptide is Ribulose bisphosphate carboxylase large chain (Tropaeolum majus (Common nasturtium)).